The sequence spans 888 residues: Prodigiosin synthesizing transferase PigC (888 aa).

Belongs to the PigC family.

Its pathway is antibiotic biosynthesis; prodigiosin biosynthesis. Its function is as follows. Involved in the biosynthesis of 2-methyl-3-n-amyl-pyrrole (MAP), one of the terminal products involved in the biosynthesis of the red antibiotic prodigiosin (Pig). Catalyzes the transfer of 2-methyl-3-n-amyl-pyrrole (MAP) to 4-methoxy-2,2'-bipyrrole-5-carbaldehyde (MBC) to yield prodigiosin. It is able to use substrates with a variety of monocyclic rings in place of the pyrrolic ring A of its natural substrate. The polypeptide is Prodigiosin synthesizing transferase PigC (Serratia marcescens).